The sequence spans 475 residues: Ribulose bisphosphate carboxylase large chain (475 aa).

A propeptide spanning residues Met-1–Ser-2 is cleaved from the precursor. The residue at position 3 (Pro-3) is an N-acetylproline. Lys-14 carries the post-translational modification N6,N6,N6-trimethyllysine. Positions 123 and 173 each coordinate substrate. Lys-175 acts as the Proton acceptor in catalysis. Lys-177 provides a ligand contact to substrate. Residues Lys-201, Asp-203, and Glu-204 each coordinate Mg(2+). An N6-carboxylysine modification is found at Lys-201. The active-site Proton acceptor is the His-294. 3 residues coordinate substrate: Arg-295, His-327, and Ser-379.

Belongs to the RuBisCO large chain family. Type I subfamily. As to quaternary structure, heterohexadecamer of 8 large chains and 8 small chains; disulfide-linked. The disulfide link is formed within the large subunit homodimers. The cofactor is Mg(2+). The disulfide bond which can form in the large chain dimeric partners within the hexadecamer appears to be associated with oxidative stress and protein turnover.

Its subcellular location is the plastid. The protein resides in the chloroplast. It carries out the reaction 2 (2R)-3-phosphoglycerate + 2 H(+) = D-ribulose 1,5-bisphosphate + CO2 + H2O. It catalyses the reaction D-ribulose 1,5-bisphosphate + O2 = 2-phosphoglycolate + (2R)-3-phosphoglycerate + 2 H(+). Its function is as follows. RuBisCO catalyzes two reactions: the carboxylation of D-ribulose 1,5-bisphosphate, the primary event in carbon dioxide fixation, as well as the oxidative fragmentation of the pentose substrate in the photorespiration process. Both reactions occur simultaneously and in competition at the same active site. In Pinus edulis (Pinyon pine), this protein is Ribulose bisphosphate carboxylase large chain.